Consider the following 200-residue polypeptide: Protein GrpE (200 aa).

A compositionally biased stretch (basic and acidic residues) spans 1-10 (MQEKDSKDVT). The tract at residues 1-57 (MQEKDSKDVTMEDEETIASQEEIEVEGNSEESSKEEESNNSEISDENLSEENLKLKD) is disordered. Acidic residues predominate over residues 11-29 (MEDEETIASQEEIEVEGNS).

Belongs to the GrpE family. In terms of assembly, homodimer.

It localises to the cytoplasm. Its function is as follows. Participates actively in the response to hyperosmotic and heat shock by preventing the aggregation of stress-denatured proteins, in association with DnaK and GrpE. It is the nucleotide exchange factor for DnaK and may function as a thermosensor. Unfolded proteins bind initially to DnaJ; upon interaction with the DnaJ-bound protein, DnaK hydrolyzes its bound ATP, resulting in the formation of a stable complex. GrpE releases ADP from DnaK; ATP binding to DnaK triggers the release of the substrate protein, thus completing the reaction cycle. Several rounds of ATP-dependent interactions between DnaJ, DnaK and GrpE are required for fully efficient folding. In Clostridium acetobutylicum (strain ATCC 824 / DSM 792 / JCM 1419 / IAM 19013 / LMG 5710 / NBRC 13948 / NRRL B-527 / VKM B-1787 / 2291 / W), this protein is Protein GrpE.